A 101-amino-acid chain; its full sequence is Small ribosomal subunit protein uS14 (101 aa).

The protein belongs to the universal ribosomal protein uS14 family. In terms of assembly, part of the 30S ribosomal subunit. Contacts proteins S3 and S10.

Its function is as follows. Binds 16S rRNA, required for the assembly of 30S particles and may also be responsible for determining the conformation of the 16S rRNA at the A site. The chain is Small ribosomal subunit protein uS14 from Psychrobacter arcticus (strain DSM 17307 / VKM B-2377 / 273-4).